A 103-amino-acid chain; its full sequence is Co-chaperonin GroES (103 aa).

This sequence belongs to the GroES chaperonin family. Heptamer of 7 subunits arranged in a ring. Interacts with the chaperonin GroEL.

The protein resides in the cytoplasm. Its function is as follows. Together with the chaperonin GroEL, plays an essential role in assisting protein folding. The GroEL-GroES system forms a nano-cage that allows encapsulation of the non-native substrate proteins and provides a physical environment optimized to promote and accelerate protein folding. GroES binds to the apical surface of the GroEL ring, thereby capping the opening of the GroEL channel. The chain is Co-chaperonin GroES from Crocosphaera subtropica (strain ATCC 51142 / BH68) (Cyanothece sp. (strain ATCC 51142)).